The sequence spans 194 residues: MLKFLKQVGDYAKEAVQAGRYIGQGLSVTFDHMRRRPVTVQYPYEKLIPGERFRGRIHYEFDKCIACEVCVRVCPINLPVVDWEFDKATKKKKLNHYSIDFGVCIFCGNCVEYCPTNCLSMTEEYELATYDRHELNYDSVALGRLPYKVTDDPMVTPLRELVYLPKGVLDPHDLPANAPRPGARPEDLVEKTEA.

4Fe-4S ferredoxin-type domains are found at residues 55-84 (GRIHYEFDKCIACEVCVRVCPINLPVVDWE) and 95-124 (NHYSIDFGVCIFCGNCVEYCPTNCLSMTEE). [4Fe-4S] cluster is bound by residues C64, C67, C70, C74, C104, C107, C110, and C114. The interval 173-194 (DLPANAPRPGARPEDLVEKTEA) is disordered. The span at 183–194 (ARPEDLVEKTEA) shows a compositional bias: basic and acidic residues.

The protein belongs to the complex I 23 kDa subunit family. In terms of assembly, NDH-1 is composed of at least 11 different subunits. The cofactor is [4Fe-4S] cluster.

It localises to the cellular thylakoid membrane. It carries out the reaction a plastoquinone + NADH + (n+1) H(+)(in) = a plastoquinol + NAD(+) + n H(+)(out). The enzyme catalyses a plastoquinone + NADPH + (n+1) H(+)(in) = a plastoquinol + NADP(+) + n H(+)(out). Functionally, NDH-1 shuttles electrons from an unknown electron donor, via FMN and iron-sulfur (Fe-S) centers, to quinones in the respiratory and/or the photosynthetic chain. The immediate electron acceptor for the enzyme in this species is believed to be plastoquinone. Couples the redox reaction to proton translocation, and thus conserves the redox energy in a proton gradient. The protein is NAD(P)H-quinone oxidoreductase subunit I of Nostoc sp. (strain PCC 7120 / SAG 25.82 / UTEX 2576).